The primary structure comprises 262 residues: Glucosamine-6-phosphate deaminase (262 aa).

Asp-63 serves as the catalytic Proton acceptor; for enolization step. Asn-129 acts as the For ring-opening step in catalysis. Residue His-131 is the Proton acceptor; for ring-opening step of the active site. Glu-136 serves as the catalytic For ring-opening step.

The protein belongs to the glucosamine/galactosamine-6-phosphate isomerase family. NagB subfamily.

The catalysed reaction is alpha-D-glucosamine 6-phosphate + H2O = beta-D-fructose 6-phosphate + NH4(+). It functions in the pathway amino-sugar metabolism; N-acetylneuraminate degradation; D-fructose 6-phosphate from N-acetylneuraminate: step 5/5. Functionally, catalyzes the reversible isomerization-deamination of glucosamine 6-phosphate (GlcN6P) to form fructose 6-phosphate (Fru6P) and ammonium ion. This chain is Glucosamine-6-phosphate deaminase, found in Bacillus cereus (strain ZK / E33L).